A 152-amino-acid chain; its full sequence is Siroheme decarboxylase NirD subunit (152 aa).

It belongs to the Ahb/Nir family. As to quaternary structure, probably forms a complex composed of NirD, NirL, NirG and NirH. All proteins are required for the total conversion of siroheme to didecarboxysiroheme.

The enzyme catalyses siroheme + 2 H(+) = 12,18-didecarboxysiroheme + 2 CO2. It participates in porphyrin-containing compound metabolism. Functionally, involved in heme d1 biosynthesis. Catalyzes the decarboxylation of siroheme into didecarboxysiroheme. This is Siroheme decarboxylase NirD subunit from Stutzerimonas stutzeri (Pseudomonas stutzeri).